Consider the following 525-residue polypeptide: Pre-mRNA-processing factor 19 homolog 2 (525 aa).

The region spanning 1–70 (MNCAISGEVP…PKTLHTASIP (70 aa)) is the U-box domain. 7 WD repeats span residues 220 to 261 (TNKP…STLT), 262 to 301 (GHSK…NYAC), 307 to 346 (DHSA…CLAQ), 351 to 390 (SKNV…NVAK), 393 to 431 (GHTG…NFKS), 433 to 469 (LSAD…AEWN), and 478 to 517 (SGTG…KANV). Residues 409–424 (FLATAAEDGVRLWDLR) carry the DWD box motif.

The protein belongs to the WD repeat PRP19 family. As to quaternary structure, homotetramer. Component of the multiprotein assembly MOS4-associated complex (MAC) at least composed of MOS4, CDC5, PRL1 and PRP19 which is related to the PRP19C/Prp19 complex/NTC/Nineteen complex identified in other organisms. Associated with the spliceosome.

It is found in the nucleus. It carries out the reaction S-ubiquitinyl-[E2 ubiquitin-conjugating enzyme]-L-cysteine + [acceptor protein]-L-lysine = [E2 ubiquitin-conjugating enzyme]-L-cysteine + N(6)-ubiquitinyl-[acceptor protein]-L-lysine.. The protein operates within protein modification; protein ubiquitination. Probable ubiquitin-protein ligase which is mainly involved pre-mRNA splicing and DNA repair. Component of the MAC complex that probably regulates defense responses through transcriptional control and thereby is essential for plant innate immunity. In Arabidopsis thaliana (Mouse-ear cress), this protein is Pre-mRNA-processing factor 19 homolog 2 (PRP19B).